The following is a 746-amino-acid chain: SNF-related serine/threonine-protein kinase (746 aa).

Residues 16-269 (YDLDKTLGRG…LEEIESHPWL (254 aa)) enclose the Protein kinase domain. ATP-binding positions include 22 to 30 (LGRGHFAVV) and Lys45. The active-site Proton acceptor is Asp139. The residue at position 162 (Ser162) is a Phosphoserine. Thr173 carries the post-translational modification Phosphothreonine; by LKB1. The 44-residue stretch at 291–334 (SEEEHNSIIQRMVLGDIADRDAIVEALETNRYNHITATYFLLAE) folds into the UBA domain. A phosphoserine mark is found at Ser362, Ser390, Ser482, Ser495, and Ser518. The disordered stretch occupies residues 383–414 (SHATVPQSPARAGDSVLNGHRSKGLCDPAKKD). Acidic residues predominate over residues 494–503 (ESDDEFDMDE). The interval 494–638 (ESDDEFDMDE…SSSSSPASAA (145 aa)) is disordered. Residues 522-532 (VHKRYHRRKSQ) are compositionally biased toward basic residues. Positions 533-542 (GRGSSCSSSE) are enriched in low complexity. Arg534 bears the Omega-N-methylarginine mark. Basic and acidic residues predominate over residues 549–558 (ESRRRLDKDS). Gly residues-rich tracts occupy residues 575 to 592 (GSEG…GGGV) and 600 to 614 (QGTG…GGTP). The segment covering 615-638 (SGTAGSSRRCAGPDSSSSSPASAA) has biased composition (low complexity).

It belongs to the protein kinase superfamily. CAMK Ser/Thr protein kinase family. The cofactor is Mg(2+). Post-translationally, autophosphorylated. Phosphorylation on Thr-173 by STK11/LKB1 in complex with STE20-related adapter-alpha (STRADA) pseudo kinase and CAB39. As to expression, ubiquitously expressed in all tissues examined with highest levels in the brain and testis. Strongly expressed in the pyramidal and granule neurons of the hippocampus and also in the cerebellum.

The protein resides in the nucleus. The catalysed reaction is L-seryl-[protein] + ATP = O-phospho-L-seryl-[protein] + ADP + H(+). It catalyses the reaction L-threonyl-[protein] + ATP = O-phospho-L-threonyl-[protein] + ADP + H(+). With respect to regulation, activated by phosphorylation on Thr-173. Functionally, may play a role in hematopoietic cell proliferation or differentiation. Potential mediator of neuronal apoptosis. This Rattus norvegicus (Rat) protein is SNF-related serine/threonine-protein kinase.